Here is a 514-residue protein sequence, read N- to C-terminus: Maturase K (514 aa).

The protein belongs to the intron maturase 2 family. MatK subfamily.

It localises to the plastid. Its subcellular location is the chloroplast. Its function is as follows. Usually encoded in the trnK tRNA gene intron. Probably assists in splicing its own and other chloroplast group II introns. The polypeptide is Maturase K (Acer monspessulanum (Montpellier maple)).